We begin with the raw amino-acid sequence, 171 residues long: MAQINEIIELIAALLIFLGSIIAVISAIGIVKFQDVFLRSHASTKSSTLSVLLTLVGVLIYFTNEQSFFSVRLLLSIVFINLTSPVGMHLVARAAYRTGAYMYRKDDAPSRSSILLSSKEYNSTEELKNRARIREERREKIYYDVQKQRQKEKQQEENIESLSEARRETKD.

Helical transmembrane passes span Ile-11–Val-31, Val-51–Val-71, and Arg-72–Ala-92. Residues Asp-144–Glu-156 are compositionally biased toward basic and acidic residues. Residues Asp-144–Asp-171 form a disordered region.

It belongs to the CPA3 antiporters (TC 2.A.63) subunit G family. As to quaternary structure, may form a heterooligomeric complex that consists of seven subunits: mnhA2, mnhB2, mnhC2, mnhD2, mnhE2, mnhF2 and mnhG2.

The protein resides in the cell membrane. In Staphylococcus haemolyticus (strain JCSC1435), this protein is Putative antiporter subunit mnhG2 (mnhG2).